The following is a 320-amino-acid chain: Putative membrane-bound redox modulator Alx (320 aa).

Topologically, residues 1 to 6 (MNTVGT) are periplasmic. Residues 7–27 (PLLWGGFAVVVAIMLAIDLLL) traverse the membrane as a helical segment. Topologically, residues 28–43 (QGRRGAHAMTMKQAAA) are cytoplasmic. The chain crosses the membrane as a helical span at residues 44–64 (WSLVWVTLSLLFNAAFWWYLV). Residues 65 to 89 (QTEGRAVADPQALAFLTGYLIEKSL) are Periplasmic-facing. Residues 90-110 (AVDNVFVWLMLFSYFSVPAAL) traverse the membrane as a helical segment. Topologically, residues 111-113 (QRR) are cytoplasmic. The helical transmembrane segment at 114–134 (VLVYGVLGAIVLRTIMIFTGS) threads the bilayer. Trp-135 is a topological domain (periplasmic). A helical transmembrane segment spans residues 136–156 (LISQFDWILYIFGAFLLFTGV). Residues 157-198 (KMALAHEDESGIGDKPLVRWLRGHLRMTDTIDNEHFFVRKNG) are Cytoplasmic-facing. A helical transmembrane segment spans residues 199-219 (LLYATPLMLVLILVELSDVIF). Residues 220 to 225 (AVDSIP) are Periplasmic-facing. A helical transmembrane segment spans residues 226 to 246 (AIFAVTTDPFIVLTSNLFAIL). The Cytoplasmic segment spans residues 247–261 (GLRAMYFLLAGVAER). Residues 262-282 (FSMLKYGLAVILVFIGIKMLI) form a helical membrane-spanning segment. Topologically, residues 283 to 286 (VDFY) are periplasmic. A helical membrane pass occupies residues 287–307 (HIPIAVSLGVVFGILVMTFII). At 308–320 (NAWVNYRHDKQRG) the chain is on the cytoplasmic side.

Belongs to the TerC family.

The protein resides in the cell inner membrane. Has been proposed to be a redox modulator. In Shigella flexneri, this protein is Putative membrane-bound redox modulator Alx (alx).